We begin with the raw amino-acid sequence, 334 residues long: Nucleoid-associated protein YPTS_1390 (334 aa).

This sequence belongs to the YejK family.

Its subcellular location is the cytoplasm. It localises to the nucleoid. The protein is Nucleoid-associated protein YPTS_1390 of Yersinia pseudotuberculosis serotype IB (strain PB1/+).